The following is a 432-amino-acid chain: Killer cell immunoglobulin-like receptor 3DL1 (432 aa).

The first 21 residues, 1 to 21, serve as a signal peptide directing secretion; sequence MLLWFLSLVCSGFFLVQRMSA. Residues 22 to 335 are Extracellular-facing; that stretch reads HVGSHDKPFL…ADTKTNNYKN (314 aa). 3 consecutive Ig-like C2-type domains span residues 42 to 100, 135 to 202, and 238 to 301; these read GQNV…HPQY, GGNV…NSYY, and GETM…FRNA. N-linked (GlcNAc...) asparagine glycosylation is present at asparagine 44. Residues cysteine 49 and cysteine 95 are joined by a disulfide bond. Asparagine 137 is a glycosylation site (N-linked (GlcNAc...) asparagine). 2 disulfide bridges follow: cysteine 142-cysteine 195 and cysteine 245-cysteine 294. Asparagine 300 carries N-linked (GlcNAc...) asparagine glycosylation. The helical transmembrane segment at 336-356 threads the bilayer; sequence LHILTGLLVTMVLVVIIIFYS. Residues 357 to 432 are Cytoplasmic-facing; that stretch reads CYFSKQNKSQ…DTIVYMEIMK (76 aa).

It belongs to the immunoglobulin superfamily.

Its subcellular location is the cell membrane. Receptor on natural killer (NK) cells. Inhibits the activity of NK cells thus preventing cell lysis. The polypeptide is Killer cell immunoglobulin-like receptor 3DL1 (Kir3dl1) (Mus musculus (Mouse)).